Consider the following 476-residue polypeptide: Aspartyl/glutamyl-tRNA(Asn/Gln) amidotransferase subunit B (476 aa).

Belongs to the GatB/GatE family. GatB subfamily. As to quaternary structure, heterotrimer of A, B and C subunits.

The enzyme catalyses L-glutamyl-tRNA(Gln) + L-glutamine + ATP + H2O = L-glutaminyl-tRNA(Gln) + L-glutamate + ADP + phosphate + H(+). It carries out the reaction L-aspartyl-tRNA(Asn) + L-glutamine + ATP + H2O = L-asparaginyl-tRNA(Asn) + L-glutamate + ADP + phosphate + 2 H(+). In terms of biological role, allows the formation of correctly charged Asn-tRNA(Asn) or Gln-tRNA(Gln) through the transamidation of misacylated Asp-tRNA(Asn) or Glu-tRNA(Gln) in organisms which lack either or both of asparaginyl-tRNA or glutaminyl-tRNA synthetases. The reaction takes place in the presence of glutamine and ATP through an activated phospho-Asp-tRNA(Asn) or phospho-Glu-tRNA(Gln). The polypeptide is Aspartyl/glutamyl-tRNA(Asn/Gln) amidotransferase subunit B (Vesicomyosocius okutanii subsp. Calyptogena okutanii (strain HA)).